A 52-amino-acid polypeptide reads, in one-letter code: Conotoxin-like peptide 2 (52 aa).

The signal sequence occupies residues 1-18 (MKFSTILLLVCPTVALSA). Disulfide bonds link cysteine 24/cysteine 38, cysteine 31/cysteine 42, and cysteine 37/cysteine 49.

It localises to the secreted. The protein is Conotoxin-like peptide 2 (CTL-2) of Orgyia pseudotsugata (Douglas-fir tussock moth).